Reading from the N-terminus, the 264-residue chain is Thymidylate synthase (264 aa).

Residue R21 coordinates dUMP. H51 lines the (6R)-5,10-methylene-5,6,7,8-tetrahydrofolate pocket. 126–127 provides a ligand contact to dUMP; the sequence is RR. The active-site Nucleophile is C146. Residues 166–169, N177, and 207–209 each bind dUMP; these read RSAD and HLY. D169 provides a ligand contact to (6R)-5,10-methylene-5,6,7,8-tetrahydrofolate. A263 is a binding site for (6R)-5,10-methylene-5,6,7,8-tetrahydrofolate.

This sequence belongs to the thymidylate synthase family. Bacterial-type ThyA subfamily. Homodimer.

The protein localises to the cytoplasm. The catalysed reaction is dUMP + (6R)-5,10-methylene-5,6,7,8-tetrahydrofolate = 7,8-dihydrofolate + dTMP. Its pathway is pyrimidine metabolism; dTTP biosynthesis. In terms of biological role, catalyzes the reductive methylation of 2'-deoxyuridine-5'-monophosphate (dUMP) to 2'-deoxythymidine-5'-monophosphate (dTMP) while utilizing 5,10-methylenetetrahydrofolate (mTHF) as the methyl donor and reductant in the reaction, yielding dihydrofolate (DHF) as a by-product. This enzymatic reaction provides an intracellular de novo source of dTMP, an essential precursor for DNA biosynthesis. This is Thymidylate synthase from Allorhizobium ampelinum (strain ATCC BAA-846 / DSM 112012 / S4) (Agrobacterium vitis (strain S4)).